The following is a 288-amino-acid chain: Pantothenate synthetase (288 aa).

27 to 34 is an ATP binding site; it reads MGALHEGH. Histidine 34 serves as the catalytic Proton donor. The (R)-pantoate site is built by glutamine 58 and glutamine 150. Glutamine 58 is a beta-alanine binding site. Residues leucine 173 and 181–184 contribute to the ATP site; that span reads YSSR.

It belongs to the pantothenate synthetase family. Homodimer.

It is found in the cytoplasm. The catalysed reaction is (R)-pantoate + beta-alanine + ATP = (R)-pantothenate + AMP + diphosphate + H(+). Its pathway is cofactor biosynthesis; (R)-pantothenate biosynthesis; (R)-pantothenate from (R)-pantoate and beta-alanine: step 1/1. In terms of biological role, catalyzes the condensation of pantoate with beta-alanine in an ATP-dependent reaction via a pantoyl-adenylate intermediate. This Tropheryma whipplei (strain TW08/27) (Whipple's bacillus) protein is Pantothenate synthetase.